The chain runs to 147 residues: Protein disulfide isomerase-like 5-1 (147 aa).

The signal sequence occupies residues 1–29 (MDLAPGRRARLLVALALVVLVALAARSGA). Positions 30 to 137 (EVITLTEETF…LKNFVSDEAE (108 aa)) constitute a Thioredoxin domain. Active-site nucleophile residues include C59 and C62. Cysteines 59 and 62 form a disulfide.

It belongs to the protein disulfide isomerase family.

In terms of biological role, acts as a protein-folding catalyst that interacts with nascent polypeptides to catalyze the formation, isomerization, and reduction or oxidation of disulfide bonds. May play a role in storage protein biogenesis. This is Protein disulfide isomerase-like 5-1 (PDIL5-1) from Oryza sativa subsp. japonica (Rice).